The primary structure comprises 78 residues: Putative gastrointestinal growth factor xP1 (78 aa).

An N-terminal signal peptide occupies residues 1–23 (MNYKVFCLVAIALIVGSIGSANG). In terms of domain architecture, P-type spans 30-73 (EQCSVERLARVNCGYSGITPQECTKQGCCFDSTIQDAPWCFYPR). Cystine bridges form between C32-C58, C42-C57, and C52-C69.

As to expression, stomach mucosa.

The protein localises to the secreted. In terms of biological role, may act as a growth factor. The chain is Putative gastrointestinal growth factor xP1 (p1) from Xenopus laevis (African clawed frog).